Reading from the N-terminus, the 1551-residue chain is MCSRGDANTADAAAARRVTGLRYNMRLLIALALPCLFSLAEANSKAITTSLTTKWFSAPLLLEASEFLAEDSQEKFWSFVEATQNIGSSDHHDTDHSYYDAVLEAAFRFLSPLQQNLLKFCLSLRSYSASIQAFQQIAVDEPPPEGCKSFLSVHGKQTCDLDTLESLLLTAADRPKPLLFKGDHRYPSSNPESPVVILYSEIGHEEFSNIHHQLISKSNEGKINYVFRHYISNPSKEPVYLSGYGVELAIKSTEYKAKDDTQVKGTEVNATVIGESDPIDEVQGFLFGKLRELYPALEGQLKEFRKHLVESTNEMAPLKVWQLQDLSFQTAARILAASGALSLVVMKDISQNFPTKARAITKTAVSAQLRAEVEENQKYFKGTIGLQPGDSALFINGLHIDLDTQDIFSLFDTLRNEARVMEGLHRLGIEGLSLHNILKLNIQPSETDYAVDIRSPAISWVNNLEVDSRYNSWPSSLQELLRPTFPGVIRQIRKNLHNMVFIIDPVHETTAELISIAEMFLSNHIPLRIGFIFVVNDSEDVDGMQDAGVAVLRAYNYVAQEVDGYHAFQTLTQIYNKVRTGETVKVEHVVSVLEKKYPYVEVNSILGIDSAYDQNRKEARGYYEQTGVGPLPVVLFNGMPFEKEQLDPDELETITMHKILETTTFFQRAVYLGELSHDQDVVEYIMNQPNVVPRINSRILTAKREYLDLTASNNFYVDDFARFSALDSRGKTAAIANSMNYLTKKGMSSKEIYDDSFIRPVTFWIVGDFDSPSGRQLLYDAIKHQKTSNNVRISMINNPSQEISDSSTPIFRAIWAALQTQASSSAKNFITKMAKEETAEALAAGVDIAEFSVGGMDVSLFKEVFESSRMDFILSHALYCRDVLKLKKGQRVVISNGRIIGPLEDNELFNQDDFHLLENIILKTSGQKIKSHIQQLRVEEDVASDLVMKVDALLSAQPKGEARIEYQFFEDKHSAIKLKPKEGETYYDVVAVVDPVTREAQRLAPLLLVLTQLINMNLRVFMNCQSKLSDMPLKSFYRYVLEPEISFTADSSFAKGPIAKFLDMPQSPLFTLNLNTPESWMVESVRTPYDLDNIYLEEVDSIVAAEYELEYLLLEGHCYDITTGQPPRGLQFTLGTSANPTIVDTIVMANLGYFQLKANPGAWILRLRKGRSDDIYRIYSHDGTDSPPDANDVVVILNNFKSKIIKVKVQKKADMANEDLLSDGTNENESGFWDSFKWGFSGQKAEEVKQDKDDIINIFSVASGHLYERFLRIMMLSVLKNTKTPVKFWFLKNYLSPTFKEFIPYMAKKYNFQYELVQYKWPRWLHQQTEKQRIIWGYKILFLDVLFPLVVDKFLFVDADQIVRTDLKELRDFNLDGAPYGYTPFCDSRREMDGYRFWKSGYWASHLAGRKYHISALYVVDLKKFRKIAAGDRLRGQYQGLSQDPNSLSNLDQDLPNNMIHQVPIKSLPQEWLWCETWCDDASKKRAKTIDLCNNPMTKEPKLEAAVRIVPEWQDYDQEIKQLQTLFQEEKELGTLHTEETQEGSQKHEEL.

The N-terminal stretch at 1 to 42 is a signal peptide; it reads MCSRGDANTADAAAARRVTGLRYNMRLLIALALPCLFSLAEA. N-linked (GlcNAc...) asparagine glycans are attached at residues asparagine 269, asparagine 536, and asparagine 1228. The interval 1244 to 1551 is glucosyltransferase; that stretch reads KAEEVKQDKD…QEGSQKHEEL (308 aa). Serine 1277 is modified (phosphoserine). Positions 1531 to 1551 are disordered; sequence KELGTLHTEETQEGSQKHEEL. The Prevents secretion from ER motif lies at 1548-1551; it reads HEEL.

The protein belongs to the glycosyltransferase 8 family. As to quaternary structure, monomer as well as in a tight complex with SELENOF. Interacts with METTL23. Part of a large chaperone multiprotein complex comprising DNAJB11, HSP90B1, HSPA5, HYOU, PDIA2, PDIA4, PDIA6, PPIB, SDF2L1, UGGT1 and very small amounts of ERP29, but not, or at very low levels, CALR nor CANX. It depends on Ca(2+) as a cofactor. The cofactor is Mn(2+).

It localises to the endoplasmic reticulum lumen. The protein localises to the endoplasmic reticulum-Golgi intermediate compartment. The enzyme catalyses N(4)-(alpha-D-Man-(1-&gt;2)-alpha-D-Man-(1-&gt;2)-alpha-D-Man-(1-&gt;3)-[alpha-D-Man-(1-&gt;2)-alpha-D-Man-(1-&gt;3)-[alpha-D-Man-(1-&gt;2)-alpha-D-Man-(1-&gt;6)]-alpha-D-Man-(1-&gt;6)]-beta-D-Man-(1-&gt;4)-beta-D-GlcNAc-(1-&gt;4)-beta-D-GlcNAc)-L-asparaginyl-[protein] (N-glucan mannose isomer 9A1,2,3B1,2,3) + UDP-alpha-D-glucose = N(4)-(alpha-D-Glc-(1-&gt;3)-alpha-D-Man-(1-&gt;2)-alpha-D-Man-(1-&gt;2)-alpha-D-Man-(1-&gt;3)-[alpha-D-Man-(1-&gt;2)-alpha-D-Man-(1-&gt;3)-[alpha-D-Man-(1-&gt;2)-alpha-D-Man-(1-&gt;6)]-alpha-D-Man-(1-&gt;6)]-beta-D-Man-(1-&gt;4)-beta-D-GlcNAc-(1-&gt;4)-beta-D-GlcNAc)-L-asparaginyl-[protein] + UDP + H(+). It functions in the pathway protein modification; protein glycosylation. Recognizes glycoproteins with minor folding defects. Reglucosylates single N-glycans near the misfolded part of the protein, thus providing quality control for protein folding in the endoplasmic reticulum. Reglucosylated proteins are recognized by calreticulin for recycling to the endoplasmic reticulum and refolding or degradation. The polypeptide is UDP-glucose:glycoprotein glucosyltransferase 1 (Uggt1) (Mus musculus (Mouse)).